We begin with the raw amino-acid sequence, 231 residues long: Killer cell lectin-like receptor subfamily F member 1 (231 aa).

Residues 1–38 (MQDEERYMTLNVQSKKRTSTQTTQLTFKDYSVVLHWYK) are Cytoplasmic-facing. Tyrosine 7 is modified (phosphotyrosine). The chain crosses the membrane as a helical; Signal-anchor for type II membrane protein span at residues 39–59 (ILLGISGTLNGILALALISLI). Residues 60–231 (LLVSQGVLLK…SSVFKWICQY (172 aa)) lie on the Extracellular side of the membrane. N-linked (GlcNAc...) asparagine glycans are attached at residues asparagine 77, asparagine 91, asparagine 96, and asparagine 176. The region spanning 121 to 230 (YRGKCYWFSN…CSSVFKWICQ (110 aa)) is the C-type lectin domain. 2 disulfides stabilise this stretch: cysteine 142–cysteine 229 and cysteine 208–cysteine 221.

As to quaternary structure, homodimer. Interacts with CLEC2B. Phosphorylated on Tyr-7; this phosphorylation is required for NKp80/KLRF1-mediated cytotoxicity.

The protein localises to the membrane. Functions as an activating receptor involved in immunosurveillance upon binding to various ligands displayed at the surface of myeloid cells. Upon interaction with CLEC2B ligand, stimulates NK-cell cytotoxicity and cytokine production leading to the cytolysis of malignant CLEC2B-expressing myeloid cells. Actviation of the common cytotoxicity pathway involves SRC and SYK kinases. The polypeptide is Killer cell lectin-like receptor subfamily F member 1 (KLRF1) (Macaca fascicularis (Crab-eating macaque)).